Consider the following 466-residue polypeptide: Vacuolar protein sorting-associated protein 30 (466 aa).

The segment at 35-55 is disordered; sequence SETNTDNSDNNKHNGENDRNI. Residues 43–53 are compositionally biased toward basic and acidic residues; it reads DNNKHNGENDR. Positions 149 to 258 form a coiled coil; it reads DTLLEKLKEE…QMEHLSFIKD (110 aa). Residues 279 to 463 are BARA; it reads LNIYNETFRI…LAFSTSRINK (185 aa). The tract at residues 439–464 is required for membrane-association, autophagic function during starvation and normal autophagosome morphology; the sequence is WTTACKFLLTNIKWLLAFSTSRINKA.

This sequence belongs to the beclin family. In terms of assembly, component of the autophagy-specific VPS34 PI3-kinase complex I; and of the VPS34 PI3-kinase complex II.

The protein localises to the endosome membrane. The protein resides in the vacuole membrane. Its subcellular location is the preautophagosomal structure membrane. Functionally, required for cytoplasm to vacuole transport (Cvt), autophagy, nucleophagy, and mitophagy, as a part of the autophagy-specific VPS34 PI3-kinase complex I. This complex is essential to recruit the ATG8-phosphatidylinositol conjugate and the ATG12-ATG5 conjugate to the pre-autophagosomal structure. Also involved in endosome-to-Golgi retrograde transport as part of the VPS34 PI3-kinase complex II. In Kluyveromyces marxianus (strain DMKU3-1042 / BCC 29191 / NBRC 104275) (Yeast), this protein is Vacuolar protein sorting-associated protein 30.